An 808-amino-acid polypeptide reads, in one-letter code: Leucine--tRNA ligase (808 aa).

The short motif at 40 to 51 (PYPSGQGLHVGH) is the 'HIGH' region element. The 'KMSKS' region motif lies at 580–584 (KMSKS). Lys-583 contributes to the ATP binding site.

This sequence belongs to the class-I aminoacyl-tRNA synthetase family.

Its subcellular location is the cytoplasm. It catalyses the reaction tRNA(Leu) + L-leucine + ATP = L-leucyl-tRNA(Leu) + AMP + diphosphate. The polypeptide is Leucine--tRNA ligase (Leuconostoc mesenteroides subsp. mesenteroides (strain ATCC 8293 / DSM 20343 / BCRC 11652 / CCM 1803 / JCM 6124 / NCDO 523 / NBRC 100496 / NCIMB 8023 / NCTC 12954 / NRRL B-1118 / 37Y)).